The sequence spans 804 residues: Probable replication endonuclease from prophage-like region 1 (804 aa).

Catalysis depends on O-(5'-phospho-DNA)-tyrosine intermediate residues tyrosine 498 and tyrosine 502.

The protein belongs to the phage GPA family.

Possible endonuclease which induces a single-strand cut and initiates DNA replication. The chain is Probable replication endonuclease from prophage-like region 1 from Salmonella typhi.